We begin with the raw amino-acid sequence, 337 residues long: MAVEMFYDADADLSIIQGRKVAVIGYGSQGHAHSLSLRDSGVQVKVGLKEGSKSREKVTEQGLEVDTPAEVAKWADVIMLLAPDTAQAEIFTNDIEPNLEDGNALFFGHGLNIHFGLIKPPANVTIGMVAPKGPGHLVRRQFVDGKGVPCLIAIDQDPKGEGQALALSYAAAIGGARAGVIKTTFKEETETDLFGEQAVLCGGTEELVKTGFEVMVEAGYAPEMAYFEVLHELKLIVDLMYEGGIARMNYSVSDTAEFGGYLSGPRVIDADTKKRMQDILKDIQDGTFVKRLVANVEGGNKELEALRKKNAEHPIEVTGKKLRDLMSWVDRPITETA.

Positions 3–183 (VEMFYDADAD…GGARAGVIKT (181 aa)) constitute a KARI N-terminal Rossmann domain. Residues 26-29 (YGSQ), K49, S52, S54, and 84-87 (DTAQ) contribute to the NADP(+) site. H109 is an active-site residue. G135 contacts NADP(+). The 146-residue stretch at 184–329 (TFKEETETDL…KKLRDLMSWV (146 aa)) folds into the KARI C-terminal knotted domain. The Mg(2+) site is built by D192, E196, E228, and E232. S253 is a binding site for substrate.

Belongs to the ketol-acid reductoisomerase family. Requires Mg(2+) as cofactor.

It catalyses the reaction (2R)-2,3-dihydroxy-3-methylbutanoate + NADP(+) = (2S)-2-acetolactate + NADPH + H(+). The catalysed reaction is (2R,3R)-2,3-dihydroxy-3-methylpentanoate + NADP(+) = (S)-2-ethyl-2-hydroxy-3-oxobutanoate + NADPH + H(+). Its pathway is amino-acid biosynthesis; L-isoleucine biosynthesis; L-isoleucine from 2-oxobutanoate: step 2/4. The protein operates within amino-acid biosynthesis; L-valine biosynthesis; L-valine from pyruvate: step 2/4. Functionally, involved in the biosynthesis of branched-chain amino acids (BCAA). Catalyzes an alkyl-migration followed by a ketol-acid reduction of (S)-2-acetolactate (S2AL) to yield (R)-2,3-dihydroxy-isovalerate. In the isomerase reaction, S2AL is rearranged via a Mg-dependent methyl migration to produce 3-hydroxy-3-methyl-2-ketobutyrate (HMKB). In the reductase reaction, this 2-ketoacid undergoes a metal-dependent reduction by NADPH to yield (R)-2,3-dihydroxy-isovalerate. The sequence is that of Ketol-acid reductoisomerase (NADP(+)) from Mycolicibacterium vanbaalenii (strain DSM 7251 / JCM 13017 / BCRC 16820 / KCTC 9966 / NRRL B-24157 / PYR-1) (Mycobacterium vanbaalenii).